Here is a 124-residue protein sequence, read N- to C-terminus: uncharacterized protein (124 aa).

The N-terminal stretch at 1 to 22 is a signal peptide; it reads MGTSSVLLMIASSLILLEVVMT.

This is an uncharacterized protein from Caenorhabditis elegans.